A 1025-amino-acid chain; its full sequence is Probable beta-galactosidase B (1025 aa).

The first 21 residues, 1-21 (MATAFWLLLFLLGSLHVLTAA), serve as a signal peptide directing secretion. N23 is a glycosylation site (N-linked (GlcNAc...) asparagine). Residue Y90 participates in substrate binding. N-linked (GlcNAc...) asparagine glycosylation occurs at N100. Substrate-binding residues include N135, A136, E137, and N195. The active-site Proton donor is E196. N-linked (GlcNAc...) asparagine glycosylation is present at N211. Y265 serves as a coordination point for substrate. C271 and C324 are joined by a disulfide. The active-site Nucleophile is E308. Y373 contributes to the substrate binding site. 7 N-linked (GlcNAc...) asparagine glycosylation sites follow: N411, N456, N736, N776, N884, N925, and N926.

This sequence belongs to the glycosyl hydrolase 35 family.

It is found in the secreted. It carries out the reaction Hydrolysis of terminal non-reducing beta-D-galactose residues in beta-D-galactosides.. Functionally, cleaves beta-linked terminal galactosyl residues from gangliosides, glycoproteins, and glycosaminoglycans. In Emericella nidulans (strain FGSC A4 / ATCC 38163 / CBS 112.46 / NRRL 194 / M139) (Aspergillus nidulans), this protein is Probable beta-galactosidase B (lacB).